A 234-amino-acid polypeptide reads, in one-letter code: HTH-type transcriptional regulator MT1864 (234 aa).

The region spanning 15-75 (EQIEAKIVEL…LLLVDAYSDL (61 aa)) is the HTH tetR-type domain. A DNA-binding region (H-T-H motif) is located at residues 38–57 (SLRAIARNLGMVSSAVYRYV).

Homodimer.

It localises to the cytoplasm. Functionally, may participate in the regulatory network that controls the expression of MmpL lipid transporters. The protein is HTH-type transcriptional regulator MT1864 of Mycobacterium tuberculosis (strain CDC 1551 / Oshkosh).